Consider the following 475-residue polypeptide: Ribulose bisphosphate carboxylase large chain (475 aa).

Positions 1-2 (MS) are excised as a propeptide. Residue Pro-3 is modified to N-acetylproline. An N6,N6,N6-trimethyllysine modification is found at Lys-14. Asn-123 and Thr-173 together coordinate substrate. The active-site Proton acceptor is Lys-175. Lys-177 contributes to the substrate binding site. The Mg(2+) site is built by Lys-201, Asp-203, and Glu-204. At Lys-201 the chain carries N6-carboxylysine. His-294 acts as the Proton acceptor in catalysis. Substrate contacts are provided by Arg-295, His-327, and Ser-379.

Belongs to the RuBisCO large chain family. Type I subfamily. As to quaternary structure, heterohexadecamer of 8 large chains and 8 small chains; disulfide-linked. The disulfide link is formed within the large subunit homodimers. It depends on Mg(2+) as a cofactor. The disulfide bond which can form in the large chain dimeric partners within the hexadecamer appears to be associated with oxidative stress and protein turnover.

The protein resides in the plastid. It localises to the chloroplast. It catalyses the reaction 2 (2R)-3-phosphoglycerate + 2 H(+) = D-ribulose 1,5-bisphosphate + CO2 + H2O. The catalysed reaction is D-ribulose 1,5-bisphosphate + O2 = 2-phosphoglycolate + (2R)-3-phosphoglycerate + 2 H(+). Its function is as follows. RuBisCO catalyzes two reactions: the carboxylation of D-ribulose 1,5-bisphosphate, the primary event in carbon dioxide fixation, as well as the oxidative fragmentation of the pentose substrate in the photorespiration process. Both reactions occur simultaneously and in competition at the same active site. The polypeptide is Ribulose bisphosphate carboxylase large chain (Notothixos subaureus (Golden mistletoe)).